The sequence spans 380 residues: Chaperone protein DnaJ (380 aa).

The 68-residue stretch at Asp5–Gly72 folds into the J domain. The disordered stretch occupies residues Ile21 to Asp47. Residues Ala24–Pro34 are compositionally biased toward basic residues. The span at Asp35–Asp47 shows a compositional bias: basic and acidic residues. Residues Gly139–Asn217 form a CR-type zinc finger. Residues Cys152, Cys155, Cys169, Cys172, Cys191, Cys194, Cys205, and Cys208 each contribute to the Zn(2+) site. CXXCXGXG motif repeat units follow at residues Cys152–Gly159, Cys169–Gly176, Cys191–Gly198, and Cys205–Gly212.

Belongs to the DnaJ family. Homodimer. It depends on Zn(2+) as a cofactor.

The protein localises to the cytoplasm. Its function is as follows. Participates actively in the response to hyperosmotic and heat shock by preventing the aggregation of stress-denatured proteins and by disaggregating proteins, also in an autonomous, DnaK-independent fashion. Unfolded proteins bind initially to DnaJ; upon interaction with the DnaJ-bound protein, DnaK hydrolyzes its bound ATP, resulting in the formation of a stable complex. GrpE releases ADP from DnaK; ATP binding to DnaK triggers the release of the substrate protein, thus completing the reaction cycle. Several rounds of ATP-dependent interactions between DnaJ, DnaK and GrpE are required for fully efficient folding. Also involved, together with DnaK and GrpE, in the DNA replication of plasmids through activation of initiation proteins. The chain is Chaperone protein DnaJ from Polaromonas naphthalenivorans (strain CJ2).